A 969-amino-acid polypeptide reads, in one-letter code: Leucine--tRNA ligase (969 aa).

The segment at 1-23 (MTESPTTSPATGSGAAAPDSDAP) is disordered. The 'HIGH' region signature appears at 78-89 (PYPSGEGLHVGH). The short motif at 737–741 (KIGKS) is the 'KMSKS' region element. Position 740 (Lys-740) interacts with ATP.

Belongs to the class-I aminoacyl-tRNA synthetase family.

It localises to the cytoplasm. It catalyses the reaction tRNA(Leu) + L-leucine + ATP = L-leucyl-tRNA(Leu) + AMP + diphosphate. This chain is Leucine--tRNA ligase, found in Mycobacterium avium (strain 104).